The chain runs to 310 residues: MKGQQKTAETEEGTVQIQEGAVATGEDPTSVAIASIQSAATFPDPNVKYVFRTENGGQVMYRVIQVSEGQLDGQTEGTGAISGYPATQSMTQAVIQGAFTSDDAVDTEGTAAETHYTYFPSTAVGDGAGGTTSGSTAAVVTTQGSEALLGQATPPGTGQFFVMMSPQEVLQGGSQRSIAPRTHPYSPKSEAPRTTRDEKRRAQHNEVERRRRDKINNWIVQLSKIIPDCSMESTKSGQSKGGILSKACDYIQELRQSNHRLSEELQGLDQLQLDNDVLRQQVEDLKNKNLLLRAQLRHHGLEVVIKNDSN.

Over residues 1–17 (MKGQQKTAETEEGTVQI) the composition is skewed to polar residues. Disordered regions lie at residues 1 to 26 (MKGQ…ATGE) and 171 to 209 (QGGS…EVER). A compositionally biased stretch (basic and acidic residues) spans 190–209 (EAPRTTRDEKRRAQHNEVER). Residues 199 to 254 (KRRAQHNEVERRRRDKINNWIVQLSKIIPDCSMESTKSGQSKGGILSKACDYIQEL) form the bHLH domain. Residues 271–292 (LQLDNDVLRQQVEDLKNKNLLL) form a leucine-zipper region. Residue lysine 306 forms a Glycyl lysine isopeptide (Lys-Gly) (interchain with G-Cter in SUMO2) linkage.

In terms of assembly, efficient DNA binding requires dimerization with another bHLH protein. Binds DNA as a homodimer or a heterodimer (USF1/USF2). Interacts with varicella-zoster virus IE62 protein.

The protein localises to the nucleus. Transcription factor that binds to a symmetrical DNA sequence (E-boxes) (5'-CACGTG-3') that is found in a variety of viral and cellular promoters. This chain is Upstream stimulatory factor 1 (USF1), found in Homo sapiens (Human).